The primary structure comprises 121 residues: MARIAGIDIPREKRVEIALTYVYGIGLTRSKLILANAGVNPDIRVKDLSDSDVQKLRGATEEFTLEGDLRRKEGMALKRLQDIGCVRGRRHRMSLPVRGQRTRTNARTRRGSRKTVAGRKK.

The tract at residues 91–121 is disordered; that stretch reads HRMSLPVRGQRTRTNARTRRGSRKTVAGRKK. Over residues 100 to 121 the composition is skewed to basic residues; the sequence is QRTRTNARTRRGSRKTVAGRKK.

The protein belongs to the universal ribosomal protein uS13 family. Part of the 30S ribosomal subunit. Forms a loose heterodimer with protein S19. Forms two bridges to the 50S subunit in the 70S ribosome.

Located at the top of the head of the 30S subunit, it contacts several helices of the 16S rRNA. In the 70S ribosome it contacts the 23S rRNA (bridge B1a) and protein L5 of the 50S subunit (bridge B1b), connecting the 2 subunits; these bridges are implicated in subunit movement. Contacts the tRNAs in the A and P-sites. The polypeptide is Small ribosomal subunit protein uS13 (Prochlorococcus marinus (strain MIT 9312)).